Here is a 253-residue protein sequence, read N- to C-terminus: Imidazole glycerol phosphate synthase subunit HisF (253 aa).

Catalysis depends on residues Asp11 and Asp130.

It belongs to the HisA/HisF family. Heterodimer of HisH and HisF.

The protein localises to the cytoplasm. The catalysed reaction is 5-[(5-phospho-1-deoxy-D-ribulos-1-ylimino)methylamino]-1-(5-phospho-beta-D-ribosyl)imidazole-4-carboxamide + L-glutamine = D-erythro-1-(imidazol-4-yl)glycerol 3-phosphate + 5-amino-1-(5-phospho-beta-D-ribosyl)imidazole-4-carboxamide + L-glutamate + H(+). Its pathway is amino-acid biosynthesis; L-histidine biosynthesis; L-histidine from 5-phospho-alpha-D-ribose 1-diphosphate: step 5/9. Functionally, IGPS catalyzes the conversion of PRFAR and glutamine to IGP, AICAR and glutamate. The HisF subunit catalyzes the cyclization activity that produces IGP and AICAR from PRFAR using the ammonia provided by the HisH subunit. In Lysinibacillus sphaericus (strain C3-41), this protein is Imidazole glycerol phosphate synthase subunit HisF.